Here is a 195-residue protein sequence, read N- to C-terminus: Endoribonuclease YbeY (195 aa).

Positions 152, 156, and 162 each coordinate Zn(2+).

Belongs to the endoribonuclease YbeY family. It depends on Zn(2+) as a cofactor.

It is found in the cytoplasm. Single strand-specific metallo-endoribonuclease involved in late-stage 70S ribosome quality control and in maturation of the 3' terminus of the 16S rRNA. This Rhodopseudomonas palustris (strain HaA2) protein is Endoribonuclease YbeY.